The primary structure comprises 251 residues: 5'-nucleotidase SurE (251 aa).

A divalent metal cation contacts are provided by Asp9, Asp10, Ser40, and Asn94.

It belongs to the SurE nucleotidase family. Requires a divalent metal cation as cofactor.

It is found in the cytoplasm. The catalysed reaction is a ribonucleoside 5'-phosphate + H2O = a ribonucleoside + phosphate. In terms of biological role, nucleotidase that shows phosphatase activity on nucleoside 5'-monophosphates. This Aquifex aeolicus (strain VF5) protein is 5'-nucleotidase SurE.